The sequence spans 612 residues: uncharacterized protein (612 aa).

The next 6 helical transmembrane spans lie at 13-33 (IPLT…EWLP), 38-58 (AILV…EGIA), 67-87 (TIMA…IQII), 107-127 (GFIV…AIFL), 144-164 (LLIP…LGTS), and 189-209 (LGLL…PILL). RCK C-terminal domains lie at 218–302 (GNVA…ERGI) and 316–403 (NNAG…LLVL). Helical transmembrane passes span 419–439 (AIAI…PISV), 459–479 (IYGA…PLGT), 501–521 (LSGY…TEIL), 525–545 (ATVV…GLNP), 546–566 (LAFM…PIGY), and 586–606 (IGAP…MLIY).

Belongs to the SLC13A/DASS transporter (TC 2.A.47) family. NADC subfamily.

The protein resides in the cell membrane. This is an uncharacterized protein from Synechocystis sp. (strain ATCC 27184 / PCC 6803 / Kazusa).